Reading from the N-terminus, the 207-residue chain is Small ribosomal subunit protein uS4 (207 aa).

Residues 35–54 form a disordered region; it reads RPKPPGPQLGRPRRLSDRGQ. Residues 97 to 163 enclose the S4 RNA-binding domain; it reads RRLDNVLFRL…AYFKTLAENI (67 aa).

Belongs to the universal ribosomal protein uS4 family. Part of the 30S ribosomal subunit. Contacts protein S5. The interaction surface between S4 and S5 is involved in control of translational fidelity.

One of the primary rRNA binding proteins, it binds directly to 16S rRNA where it nucleates assembly of the body of the 30S subunit. Its function is as follows. With S5 and S12 plays an important role in translational accuracy. This is Small ribosomal subunit protein uS4 from Dehalococcoides mccartyi (strain CBDB1).